The chain runs to 46 residues: Gene 1.1 protein (46 aa).

Residues M1 to V14 show a composition bias toward basic and acidic residues. A disordered region spans residues M1–N46.

In terms of biological role, the function of this early gene protein is unknown. The sequence is that of Gene 1.1 protein (1.1) from Escherichia coli (Bacteriophage T3).